Here is an 892-residue protein sequence, read N- to C-terminus: Alpha-actinin-1 (892 aa).

Position 1 is an N-acetylmethionine (Met1). The segment at 1-247 is actin-binding; that stretch reads MDHYDSQQTN…IMTYVSSFYH (247 aa). At Ser6 the chain carries Phosphoserine. The residue at position 12 (Tyr12) is a Phosphotyrosine; by FAK1. Calponin-homology (CH) domains follow at residues 31-135 and 144-250; these read KQQR…LRFA and TSAK…HAFS. Lys95 and Lys195 each carry N6-acetyllysine. 4 Spectrin repeats span residues 274–384, 394–499, 509–620, and 630–733; these read QLME…WLLN, HLAE…ALER, QLYL…ALTE, and RLRK…EVEN. Residues 274–733 form an interaction with DDN region; it reads QLMEDYEKLA…IARTINEVEN (460 aa). Phosphoserine is present on Ser471. The residue at position 676 (Lys676) is an N6-acetyllysine. Position 677 is a phosphoserine (Ser677). 2 EF-hand domains span residues 746–781 and 787–822; these read EQMN…LGYD and QGEA…ETAD. Residues Asp759, Asp761, Ser763, Thr765, and Glu770 each contribute to the Ca(2+) site. At Ser890 the chain carries Phosphoserine.

The protein belongs to the alpha-actinin family. In terms of assembly, homodimer; antiparallel. Interacts with MYOZ2, TTID and LPP. Interacts with DDN. Interacts with PSD. Interacts with MICALL2. Interacts with DNM2 and CTTN. Interacts with PDLIM1. Interacts with PDLIM2. Interacts with PDLIM4 (via PDZ domain). Interacts with IGSF8.

It localises to the cytoplasm. Its subcellular location is the cytoskeleton. It is found in the myofibril. The protein localises to the sarcomere. The protein resides in the z line. It localises to the cell membrane. Its subcellular location is the cell junction. It is found in the cell projection. The protein localises to the ruffle. F-actin cross-linking protein which is thought to anchor actin to a variety of intracellular structures. Association with IGSF8 regulates the immune synapse formation and is required for efficient T-cell activation. This Homo sapiens (Human) protein is Alpha-actinin-1 (ACTN1).